Reading from the N-terminus, the 686-residue chain is Proprotein convertase subtilisin/kexin type 9 (686 aa).

The signal sequence occupies residues 1–28; the sequence is MGTVSSRRLWWPLPLLLLLLLGPAGTRA. A propeptide spanning residues 29–150 is cleaved from the precursor; that stretch reads QEDDDDDYEE…IEEDSSVFAQ (122 aa). Sulfotyrosine is present on Tyr36. Ser45 carries the phosphoserine modification. One can recognise an Inhibitor I9 domain in the interval 75 to 147; that stretch reads TYVVVLKEET…VDYIEEDSSV (73 aa). The region spanning 153-459 is the Peptidase S8 domain; the sequence is PWNLERITPA…GWQLFCRTVW (307 aa). Active-site charge relay system residues include Asp184 and His224. 2 cysteine pairs are disulfide-bonded: Cys221-Cys253 and Cys321-Cys356. Residue Ser384 is the Charge relay system of the active site. Residues 448–686 form a C-terminal domain region; it reads GEGWQLFCRT…CRSQHLAQAS (239 aa). 3 disulfide bridges follow: Cys455–Cys525, Cys475–Cys524, and Cys484–Cys507. N-linked (GlcNAc...) asparagine glycosylation occurs at Asn531. 6 disulfide bridges follow: Cys532/Cys599, Cys550/Cys598, Cys560/Cys586, Cys606/Cys677, Cys624/Cys676, and Cys633/Cys652. At Ser686 the chain carries Phosphoserine.

The protein belongs to the peptidase S8 family. As to quaternary structure, monomer. Can self-associate to form dimers and higher multimers which may have increased LDLR degrading activity. The precursor protein but not the mature protein may form multimers. Interacts with APOB, VLDLR, LRP8/APOER2 and BACE1. The full-length immature form (pro-PCSK9) interacts with SCNN1A, SCNN1B and SCNN1G. The pro-PCSK9 form (via C-terminal domain) interacts with LDLR. Interacts (via the C-terminal domain) with ANXA2 (via repeat Annexin 1); the interaction inhibits the degradation of LDLR. Ca(2+) is required as a cofactor. Post-translationally, cleavage by furin and PCSK5 generates a truncated inactive protein that is unable to induce LDLR degradation. In terms of processing, undergoes autocatalytic cleavage in the endoplasmic reticulum to release the propeptide from the N-terminus and the cleavage of the propeptide is strictly required for its maturation and activation. The cleaved propeptide however remains associated with the catalytic domain through non-covalent interactions, preventing potential substrates from accessing its active site. As a result, it is secreted from cells as a propeptide-containing, enzymatically inactive protein. Phosphorylation protects the propeptide against proteolysis.

It is found in the cytoplasm. The protein resides in the secreted. The protein localises to the endosome. Its subcellular location is the lysosome. It localises to the cell surface. It is found in the endoplasmic reticulum. The protein resides in the golgi apparatus. Its proteolytic activity is autoinhibited by the non-covalent binding of the propeptide to the catalytic domain. Inhibited by EGTA. In terms of biological role, crucial player in the regulation of plasma cholesterol homeostasis. Binds to low-density lipid receptor family members: low density lipoprotein receptor (LDLR), very low density lipoprotein receptor (VLDLR), apolipoprotein E receptor (LRP1/APOER) and apolipoprotein receptor 2 (LRP8/APOER2), and promotes their degradation in intracellular acidic compartments. Acts via a non-proteolytic mechanism to enhance the degradation of the hepatic LDLR through a clathrin LDLRAP1/ARH-mediated pathway. May prevent the recycling of LDLR from endosomes to the cell surface or direct it to lysosomes for degradation. Can induce ubiquitination of LDLR leading to its subsequent degradation. Inhibits intracellular degradation of APOB via the autophagosome/lysosome pathway in a LDLR-independent manner. Involved in the disposal of non-acetylated intermediates of BACE1 in the early secretory pathway. Inhibits epithelial Na(+) channel (ENaC)-mediated Na(+) absorption by reducing ENaC surface expression primarily by increasing its proteasomal degradation. Regulates neuronal apoptosis via modulation of LRP8/APOER2 levels and related anti-apoptotic signaling pathways. The polypeptide is Proprotein convertase subtilisin/kexin type 9 (PCSK9) (Saguinus labiatus (Red-chested mustached tamarin)).